Reading from the N-terminus, the 331-residue chain is Type 2 lactosamine alpha-2,3-sialyltransferase (331 aa).

Residues 1-4 (MRGY) are Cytoplasmic-facing. Residues 5–25 (LVAIFLSAVFLYYVLHCILWG) traverse the membrane as a helical; Signal-anchor for type II membrane protein segment. Over 26–331 (TNVYWVAPVE…KNLVINLTQD (306 aa)) the chain is Lumenal. N129, N181, N282, N295, N308, and N327 each carry an N-linked (GlcNAc...) asparagine glycan.

It belongs to the glycosyltransferase 29 family. In terms of tissue distribution, ubiquitous.

The protein resides in the golgi apparatus membrane. It carries out the reaction a neolactoside nLc4Cer(d18:1(4E)) + CMP-N-acetyl-beta-neuraminate = a neolactoside IV(3)-alpha-NeuAc-nLc4Cer(d18:1(4E)) + CMP + H(+). The catalysed reaction is a beta-D-galactosyl-(1-&gt;4)-N-acetyl-beta-D-glucosaminyl derivative + CMP-N-acetyl-beta-neuraminate = an N-acetyl-alpha-neuraminyl-(2-&gt;3)-beta-D-galactosyl-(1-&gt;4)-N-acetyl-beta-D-glucosaminyl derivative + CMP + H(+). The enzyme catalyses a neolactoside nLc6Cer(d18:1(4E)) + CMP-N-acetyl-beta-neuraminate = a neolactoside VI(3)-alpha-NeuNAc-nLc6Cer(d18:1(4E)) + CMP + H(+). Transfers the sialyl residue from CMP-N-acetyl-beta-neuraminate to the terminal galactose residue on sugar chains of glycoproteins and glycolipids. It's alpha-2,3-sialyltransferase activity is specific toward type II glycan chains (Galbeta1-4GlcNAc) on glycoproteins and glycolipids such as neolactosides nLc4Cer and nLc6Cer, whose sialyl-products serve as precursors for the Lewis X antigen. Critically involved in the synthesis of functional selectin ligands needed for neutrophil recruitment during inflammation and lymphocyte homing to the lymph nodes. The protein is Type 2 lactosamine alpha-2,3-sialyltransferase (ST3GAL6) of Homo sapiens (Human).